We begin with the raw amino-acid sequence, 242 residues long: Carboxy-S-adenosyl-L-methionine synthase (242 aa).

Residues tyrosine 39, 64–66, 89–90, 117–118, asparagine 132, and arginine 199 contribute to the S-adenosyl-L-methionine site; these read GCS, DN, and DI.

Belongs to the class I-like SAM-binding methyltransferase superfamily. Cx-SAM synthase family. In terms of assembly, homodimer.

The catalysed reaction is prephenate + S-adenosyl-L-methionine = carboxy-S-adenosyl-L-methionine + 3-phenylpyruvate + H2O. Functionally, catalyzes the conversion of S-adenosyl-L-methionine (SAM) to carboxy-S-adenosyl-L-methionine (Cx-SAM). The sequence is that of Carboxy-S-adenosyl-L-methionine synthase from Aliivibrio fischeri (strain MJ11) (Vibrio fischeri).